Consider the following 286-residue polypeptide: MPFFAVAFPVFDPVAVAIGPFAIRWYALAYIAGIVIGWLYARMLLQRQRLWGGPSPISLEAFDDFILWVTIGIILGGRTGYVLFYNLDFFIRHPAEIFELWKGGMSFHGGFMGCVAAVVLFGWKRKVPILSLGDITCAVGPIGLFLGRIANFINGELWGRPADASVPWAMVFPNAGPLPRHPSQLYEAGLEGIGLFVILALMIRAGALKRPGLIIGAFLTFYGLARITGEFFREPDPQLGFLWGDMTMGMLLSIPMVIVGILVMITTWRRGRGAPAAATPSSEAAS.

Transmembrane regions (helical) follow at residues 25–45 (WYAL…RMLL), 65–85 (FILW…VLFY), 103–123 (GGMS…LFGW), and 127–147 (VPIL…LFLG). Arg148 contacts a 1,2-diacyl-sn-glycero-3-phospho-(1'-sn-glycerol). 3 helical membrane passes run 188–208 (AGLE…AGAL), 212–232 (GLII…GEFF), and 248–268 (MGML…ITTW).

This sequence belongs to the Lgt family.

It localises to the cell inner membrane. It carries out the reaction L-cysteinyl-[prolipoprotein] + a 1,2-diacyl-sn-glycero-3-phospho-(1'-sn-glycerol) = an S-1,2-diacyl-sn-glyceryl-L-cysteinyl-[prolipoprotein] + sn-glycerol 1-phosphate + H(+). It functions in the pathway protein modification; lipoprotein biosynthesis (diacylglyceryl transfer). In terms of biological role, catalyzes the transfer of the diacylglyceryl group from phosphatidylglycerol to the sulfhydryl group of the N-terminal cysteine of a prolipoprotein, the first step in the formation of mature lipoproteins. This Rhodopseudomonas palustris (strain ATCC BAA-98 / CGA009) protein is Phosphatidylglycerol--prolipoprotein diacylglyceryl transferase.